The sequence spans 85 residues: Large ribosomal subunit protein bL27 (85 aa).

The interval 1-21 is disordered; sequence MAHKKGLGSTKNGRDSQAKRL.

Belongs to the bacterial ribosomal protein bL27 family.

The sequence is that of Large ribosomal subunit protein bL27 from Thermus thermophilus (strain ATCC BAA-163 / DSM 7039 / HB27).